Here is a 171-residue protein sequence, read N- to C-terminus: Calcium channel flower homolog (171 aa).

Topologically, residues 1–31 (MSGSGAAGAAAGPAPPAQEEGMTWWYRWLCR) are cytoplasmic. Residues 32–52 (LAGVLGAVSCAISGLFNCVTI) traverse the membrane as a helical segment. Residues 53–56 (HPLN) are Extracellular-facing. The chain crosses the membrane as a helical span at residues 57–77 (IAAGVWMIMNAFILLLCEAPF). At 78–101 (CCQFVEFANTVAEKVDRLRSWQKA) the chain is on the cytoplasmic side. Residues 102–122 (VFYCGMAIVPIVMSLTLTTLL) traverse the membrane as a helical segment. Residues 123-124 (GN) lie on the Extracellular side of the membrane. The chain crosses the membrane as a helical span at residues 125–141 (AIAFATGVLYGLSALGK). Residues 142–171 (KGDAISYARIQQQRQQADEEKLAETFEGEL) are Cytoplasmic-facing.

Belongs to the calcium channel flower family. Interacts with adaptor protein complex 2 (AP-2). Expressed in neurons in the brain (at protein level). Expressed in neuroblastoma cell lines (at protein level). Expressed in cytotoxic T-lymphoocytes (at protein level). In terms of tissue distribution, low levels of expression in various tissues including the brain, eye, heart, liver and colon. Expression in the heart is at slightly higher levels than isoform 3. Expressed in skin cells. As to expression, very low levels of expression in the brain, liver and eye. Detected at very low levels of expression in skin cells. Expressed in various tissues, with highest levels of expression in the brain and eye. Expressed in skin cells. Low levels of expression in the liver, colon, heart and spleen. In terms of tissue distribution, barely detected in the brain and liver.

It localises to the cell membrane. It is found in the vesicle. Its function is as follows. Transmembrane protein which mediates synaptic endocytosis and fitness-based cell culling. In response to different stimulus strengths, controls two major modes of synaptic vesicle (SV) retrieval in hippocampal neurons; Clathrin-mediated endocytosis (CME) in response to mild stimulation and activity-dependent bulk endocytosis (ADBE) in response to strong stimulation. In cytotoxic T-lymphoocytes (CTLs) facilitates calcium-dependent endocytosis of cytotoxic granules (CGs) at the immuno synapse. Different isoforms work as fitness fingerprints in 'loser' and 'winner' cells and thereby mediate win/lose decisions as part of the cell competition process. This is Calcium channel flower homolog (Cacfd1) from Mus musculus (Mouse).